Consider the following 338-residue polypeptide: Solute carrier family 35 member G4 (338 aa).

Residues 1 to 29 (MAGSHPYFNLPDSTHPSPPSTPPSLHWHQ) form a disordered region. Helical transmembrane passes span 37-57 (TNGL…VGPL), 160-180 (CGLL…LWTL), 190-210 (GLGY…LLVY), 221-241 (TVAF…LFVL), 250-270 (LLSW…FTCV), 281-301 (LVCA…YFML), and 305-325 (VAPS…IITA). One can recognise an EamA 1 domain in the interval 49 to 174 (LPAGFVGPLS…SILGLIIIVG (126 aa)). Residues 272-325 (YAVTKAHPALVCAVLHSEVVMALILQYFMLHETVAPSDIMGAGVVLGSIAIITA) enclose the EamA 2 domain.

Belongs to the SLC35G solute transporter family.

The protein resides in the membrane. The chain is Solute carrier family 35 member G4 (SLC35G4) from Homo sapiens (Human).